The chain runs to 381 residues: Cytochrome b (381 aa).

4 consecutive transmembrane segments (helical) span residues 34–54, 78–99, 114–134, and 179–199; these read FGSL…FLAM, WLIR…YIHI, WNIG…GYVL, and FFAF…IHVL. Residues histidine 84 and histidine 98 each contribute to the heme b site. Heme b contacts are provided by histidine 183 and histidine 197. Histidine 202 lines the a ubiquinone pocket. Helical transmembrane passes span 227-247, 289-309, 321-341, and 348-368; these read YKDA…ALFL, LGGV…PLLH, LTQV…WIGG, and FILI…IAMP.

The protein belongs to the cytochrome b family. In terms of assembly, the cytochrome bc1 complex contains 3 respiratory subunits (MT-CYB, CYC1 and UQCRFS1), 2 core proteins (UQCRC1 and UQCRC2) and probably 6 low-molecular weight proteins. Requires heme b as cofactor.

It localises to the mitochondrion inner membrane. Its function is as follows. Component of the ubiquinol-cytochrome c reductase complex (complex III or cytochrome b-c1 complex) that is part of the mitochondrial respiratory chain. The b-c1 complex mediates electron transfer from ubiquinol to cytochrome c. Contributes to the generation of a proton gradient across the mitochondrial membrane that is then used for ATP synthesis. This chain is Cytochrome b (mt-cyb), found in Isurus paucus (Longfin mako shark).